A 134-amino-acid polypeptide reads, in one-letter code: Perlwapin (134 aa).

WAP domains follow at residues Gly2 to Lys45, Pro46 to Glu89, and Lys90 to Cys132. Cystine bridges form between Cys8–Cys34, Cys17–Cys38, Cys21–Cys33, Cys27–Cys42, Cys51–Cys77, Cys59–Cys82, Cys64–Cys76, Cys70–Cys85, Cys94–Cys121, Cys104–Cys124, Cys108–Cys120, and Cys114–Cys128.

Nacreous layer of shell.

Functionally, inhibits growth of calcium carbonate crystals. May inhibit growth of certain crystallographic planes in the mineral phase of nacre in the shell. The chain is Perlwapin from Haliotis laevigata (Smooth Australian abalone).